The primary structure comprises 237 residues: tRNA(His) guanylyltransferase (237 aa).

Mg(2+) contacts are provided by Asp-29, Gly-30, and Asp-77. GTP-binding positions include 29-34 and 76-77; these read DGKKFH and SD.

Belongs to the tRNA(His) guanylyltransferase family. Mg(2+) serves as cofactor.

It carries out the reaction a 5'-end ribonucleotide-tRNA(His) + GTP + ATP + H2O = a 5'-end phospho-guanosine-ribonucleotide-tRNA(His) + AMP + 2 diphosphate + H(+). Functionally, adds a GMP to the 5'-end of tRNA(His) after transcription and RNase P cleavage. This Candida glabrata (strain ATCC 2001 / BCRC 20586 / JCM 3761 / NBRC 0622 / NRRL Y-65 / CBS 138) (Yeast) protein is tRNA(His) guanylyltransferase (THG1).